The chain runs to 586 residues: Pectinesterase 1 (586 aa).

The N-terminal stretch at 1-49 (MDSVNSFKGYGKVDEAQDLALKKKTRKRLLLLSISVVVLIAVIIAAVVA) is a signal peptide. 5 N-linked (GlcNAc...) asparagine glycosylation sites follow: asparagine 57, asparagine 97, asparagine 154, asparagine 201, and asparagine 207. An RRLM cleavage motif motif is present at residues 250–253 (RRLM). The RRLL cleavage motif motif lies at 269-272 (RRLL). Substrate is bound by residues threonine 355 and glutamine 385. Aspartate 408 acts as the Proton donor in catalysis. Cysteine 422 and cysteine 442 form a disulfide bridge. Aspartate 429 functions as the Nucleophile in the catalytic mechanism. Asparagine 466 is a glycosylation site (N-linked (GlcNAc...) asparagine). The substrate site is built by arginine 492 and tryptophan 494.

It in the N-terminal section; belongs to the PMEI family. This sequence in the C-terminal section; belongs to the pectinesterase family. As to quaternary structure, interacts with SBT6.1. In terms of tissue distribution, expressed in siliques.

The protein resides in the secreted. Its subcellular location is the cell wall. The protein localises to the golgi apparatus membrane. The enzyme catalyses [(1-&gt;4)-alpha-D-galacturonosyl methyl ester](n) + n H2O = [(1-&gt;4)-alpha-D-galacturonosyl](n) + n methanol + n H(+). It functions in the pathway glycan metabolism; pectin degradation; 2-dehydro-3-deoxy-D-gluconate from pectin: step 1/5. In terms of biological role, acts in the modification of cell walls via demethylesterification of cell wall pectin. Demethylates protein phosphatase 2A (PP2A) that have been reversibly carboxymethylated by LCMT1. Acts as a negative regulators of genes involved in salt stress response. The sequence is that of Pectinesterase 1 (PME1) from Arabidopsis thaliana (Mouse-ear cress).